The primary structure comprises 270 residues: MSNRGRLGDAFLRPGSSSFLDFLSDHAPELLPGRSAAAGNAPLAPHATTIVALTFQDGVVMAGDRRATAGTMIASREIEKVFPADDYSVIGISGSAGIGVDLARLFQLELEHYEKIEGSLLSLDGKANRLGTLLRGNLPLAMQGFVVVPLFGGYDLDRGAGRIFSYDATGGRYEEHEHHGTGSGAIFARGALKKLWRPGMDAAEAVKVAVEALYDAADDDAATGGPDPVRRIWPVVTTVTAAGYRRVPEDELATLVDALLAVRTERGRLA.

Positions 1–47 are cleaved as a propeptide — removed in mature form; by autocatalysis; that stretch reads MSNRGRLGDAFLRPGSSSFLDFLSDHAPELLPGRSAAAGNAPLAPHA. The Nucleophile role is filled by Thr-48.

This sequence belongs to the peptidase T1B family. In terms of assembly, the 20S proteasome core is composed of 14 alpha and 14 beta subunits that assemble into four stacked heptameric rings, resulting in a barrel-shaped structure. The two inner rings, each composed of seven catalytic beta subunits, are sandwiched by two outer rings, each composed of seven alpha subunits. The catalytic chamber with the active sites is on the inside of the barrel. Has a gated structure, the ends of the cylinder being occluded by the N-termini of the alpha-subunits. Is capped by the proteasome-associated ATPase, ARC.

Its subcellular location is the cytoplasm. The enzyme catalyses Cleavage of peptide bonds with very broad specificity.. It participates in protein degradation; proteasomal Pup-dependent pathway. Its activity is regulated as follows. The formation of the proteasomal ATPase ARC-20S proteasome complex, likely via the docking of the C-termini of ARC into the intersubunit pockets in the alpha-rings, may trigger opening of the gate for substrate entry. Interconversion between the open-gate and close-gate conformations leads to a dynamic regulation of the 20S proteasome proteolysis activity. Functionally, component of the proteasome core, a large protease complex with broad specificity involved in protein degradation. This chain is Proteasome subunit beta, found in Xylanimonas cellulosilytica (strain DSM 15894 / JCM 12276 / CECT 5975 / KCTC 9989 / LMG 20990 / NBRC 107835 / XIL07).